The following is a 414-amino-acid chain: MNIPMRDPVIPGTSMAYHPFLPHRAPDFAMSAVLGHQPPFFPALALPPNGAAALSLPGALAKPIMDQLVGAAETAIPFSSLGQQAAAHLRPLKTLEPEEEVEDDPKVHLEAKELWEQFHKRGTEMVITKSGRRMFPPFKVRCTGLDKKAKYILLMDIVAADDCRYKFHNSRWMVAGKADPEMPKRMYIHPDSPATGEQWMSKVVTFHKLKLTNNISDKHGFTILNSMHKYQPRFHIVRANDILKLPYSTFRTYVFPETEFIAVTAYQNDKITQLKIDNNPFAKGFRDTGNGRREKRKQLTLQSMRVYDERQKKENPTSDESSNEQTAFKCFAQSSCPAVPAVGTSSFKDLCPGEVDRDXDSXDDXXLEXSEWGKISTTTXTHPWXQPAXGRQRVTTXGTKGAAVPKATSSPXTR.

A DNA-binding region (T-box) is located at residues Leu114–Asp287. The interval Xaa359 to Arg414 is disordered.

It localises to the nucleus. Functionally, transcriptional repressor involved in developmental processes. Binds to the palindromic T site 5'-TTCACACCTAGGTGTGAA-3' DNA sequence, or a half-site, which are present in the regulatory region of several genes. Probably plays a role in limb pattern formation. The sequence is that of T-box transcription factor TBX3 (TBX3) from Gallus gallus (Chicken).